Here is a 588-residue protein sequence, read N- to C-terminus: 3-methylmercaptopropionyl-CoA dehydrogenase (588 aa).

Residue E435 is the Proton acceptor of the active site.

It belongs to the acyl-CoA dehydrogenase family. It depends on FAD as a cofactor.

It carries out the reaction 3-(methylsulfanyl)propanoyl-CoA + oxidized [electron-transfer flavoprotein] + H(+) = 3-(methylsulfanyl)acryloyl-CoA + reduced [electron-transfer flavoprotein]. In terms of biological role, involved in the assimilation of dimethylsulphoniopropionate (DMSP), an important compound in the fixation of carbon in marine phytoplankton, by mediating the conversion of 3-(methylthio)propanoyl-CoA (MMPA-CoA) to 3-(methylthio)acryloyl-CoA (MTA-CoA). The protein is 3-methylmercaptopropionyl-CoA dehydrogenase of Ruegeria pomeroyi (strain ATCC 700808 / DSM 15171 / DSS-3) (Silicibacter pomeroyi).